The following is a 271-amino-acid chain: uncharacterized protein (271 aa).

This sequence belongs to the anhydro-N-acetylmuramic acid kinase family.

This is an uncharacterized protein from Yersinia enterocolitica.